Consider the following 314-residue polypeptide: Taste receptor type 2 member 42 (314 aa).

Residues 1–7 (MATELDK) lie on the Extracellular side of the membrane. Residues 8–28 (IFLILEIAEFIIGMLGNVFIG) traverse the membrane as a helical segment. Residues 29–50 (LVNCSEGIKNQKVFSADFILTC) lie on the Cytoplasmic side of the membrane. The chain crosses the membrane as a helical span at residues 51 to 71 (LAISTIGQLFVILFDSFLVGL). Topologically, residues 72 to 101 (ASHLYTTYRLGKPVIMLWHMTNHLTTWLAT) are extracellular. The helical transmembrane segment at 102–122 (CLSIFYFFKIAHFPHSLFLWL) threads the bilayer. The Cytoplasmic portion of the chain corresponds to 123–127 (RWRMN). Residues 128–148 (GMIVMLLILSLFLLIFNSLVL) form a helical membrane-spanning segment. The Extracellular portion of the chain corresponds to 149–187 (EIFIDISLNIIDKSNLTLYLDESKTVYDKLSILKTLLSL). N-linked (GlcNAc...) asparagine glycosylation occurs at N163. The chain crosses the membrane as a helical span at residues 188–208 (TSFIPFSLSLTSLLFLFLSLV). The Cytoplasmic segment spans residues 209 to 238 (RHTRNLKLSSLGSRDSSTEAHRRAMKMVMS). The chain crosses the membrane as a helical span at residues 239–259 (FLFLFIVHFFSLQVANWIFFM). Over 260-265 (LWNNKY) the chain is Extracellular. A helical transmembrane segment spans residues 266–286 (IKFAMLALNAFPSCHSFILIL). Topologically, residues 287–314 (GNSKLRQTAVRLLWHLRNYTKTPNPLPL) are cytoplasmic.

Belongs to the G-protein coupled receptor T2R family.

It localises to the membrane. Receptor that may play a role in the perception of bitterness and is gustducin-linked. May play a role in sensing the chemical composition of the gastrointestinal content. The activity of this receptor may stimulate alpha gustducin, mediate PLC-beta-2 activation and lead to the gating of TRPM5. The sequence is that of Taste receptor type 2 member 42 (TAS2R42) from Pan troglodytes (Chimpanzee).